Reading from the N-terminus, the 259-residue chain is Ribonuclease HII (259 aa).

The region spanning 72–259 (ERIAGIDEAG…PVREALGVQS (188 aa)) is the RNase H type-2 domain. Residues aspartate 78, glutamate 79, and aspartate 170 each contribute to the a divalent metal cation site.

This sequence belongs to the RNase HII family. It depends on Mn(2+) as a cofactor. The cofactor is Mg(2+).

The protein resides in the cytoplasm. It catalyses the reaction Endonucleolytic cleavage to 5'-phosphomonoester.. Functionally, endonuclease that specifically degrades the RNA of RNA-DNA hybrids. The polypeptide is Ribonuclease HII (Geobacillus thermodenitrificans (strain NG80-2)).